A 178-amino-acid polypeptide reads, in one-letter code: Protein FAM89A (178 aa).

This sequence belongs to the FAM89 family.

This Bos taurus (Bovine) protein is Protein FAM89A (FAM89A).